A 283-amino-acid chain; its full sequence is Pantoate--beta-alanine ligase (283 aa).

Belongs to the pantothenate synthetase family.

The catalysed reaction is (R)-pantoate + beta-alanine + ATP = (R)-pantothenate + AMP + diphosphate + H(+). Its pathway is cofactor biosynthesis; (R)-pantothenate biosynthesis; (R)-pantothenate from (R)-pantoate and beta-alanine: step 1/1. This is Pantoate--beta-alanine ligase (pan6) from Schizosaccharomyces pombe (strain 972 / ATCC 24843) (Fission yeast).